The following is a 109-amino-acid chain: Small ribosomal subunit protein uS17 (109 aa).

The protein belongs to the universal ribosomal protein uS17 family. Part of the 30S ribosomal subunit.

Its function is as follows. One of the primary rRNA binding proteins, it binds specifically to the 5'-end of 16S ribosomal RNA. The sequence is that of Small ribosomal subunit protein uS17 from Methanosarcina mazei (strain ATCC BAA-159 / DSM 3647 / Goe1 / Go1 / JCM 11833 / OCM 88) (Methanosarcina frisia).